The sequence spans 537 residues: MRILKLAALSCLLFIAPSLSINCDGLSKDQCEQNFPQCQILTAKSCCGESKSYCAERDSNDCLASKISCKKDPQGNIYEFWSSCTPSSGFTDFIPSNATCSSLNCNAQQMSCKYVQQACHETSCCPDIPQCQIPATGGGPATGSATGQGTSGGTPGSCDKVNCPNGYICTIVNQLAVCVSPSSSSSSSSSTTGSHTTTGGSTTGSHTTTGGSTTGSHTTTGGSTTGSHTTTGGSTTGSHTTTGGSTTGPTCGNVNCPRGYHCEVRGSQAVCVADEFDSCANVDCGSGYHCKNGECIRDKVECDACDQINCPKGHHCISQPKGGWIGSHKKRHWQLHPEHCGGRPNKIKVICVPSPKGTCKTVQCPKGYKCKLYADGPTCVKIEKPKCLTCKDMHCESNGLLCVLTPQKKTDEECCPIIPICINPSTIAASTIATTTASTRHSTASTIASLVTGTTSGGGGMGSFGGRSDEESSDPNAILGLFEDDIFWGDNDEYFSDNYRYVDEEDIDEDFNGNDEFEIDVEGDFQEDDFEEEYAFY.

Residues 1–20 (MRILKLAALSCLLFIAPSLS) form the signal peptide. In terms of domain architecture, DSCP-N spans 21–140 (INCDGLSKDQ…CQIPATGGGP (120 aa)). Asparagine 97 carries an N-linked (GlcNAc...) asparagine glycan. One can recognise a Follistatin-like 1 domain in the interval 157 to 179 (SCDKVNCPNGYICTIVNQLAVCV). The segment at 183 to 246 (SSSSSSSSTT…GSHTTTGGST (64 aa)) is disordered. 4 consecutive Follistatin-like domains span residues 250–272 (TCGN…AVCV), 278–296 (SCAN…GECI), 358–380 (TCKT…PTCV), and 389–415 (TCKD…EECC).

Post-translationally, phosphorylated and fucosylated.

The chain is Spore coat protein SP70 (cotB) from Dictyostelium discoideum (Social amoeba).